A 334-amino-acid chain; its full sequence is MQRQIKLKNWLQTVYPERDFDLTFAAADADFRRYFRATFSDGSSVVCMDAPPDKMSVAPYLKVQKLFDMVNVPQVLHADTDLGFVVLNDLGNTTFLTAMLQEQGETAHKALLLEAIGELVELQKASREGVLPEYDRETMLREINLFPEWFVAKELGRELTFKQRQLWQQTVDTLLPPLLAQPKVYVHRDFIVRNLMLTRGRPGVLDFQDALYGPISYDLVSLLRDAFIEWEEEFVLDLVIRYWEKARAAGLPVPEAFDEFYRWFEWMGVQRHLKVAGIFARLYYRDGKDKYRPEIPRFLNYLRRVSRRYAELAPLYALLVELVGDEELETGFTF.

The protein belongs to the kinase AmgK family.

The enzyme catalyses N-acetyl-D-muramate + ATP = N-acetyl-alpha-D-muramate 1-phosphate + ADP + H(+). It carries out the reaction N-acetyl-D-glucosamine + ATP = N-acetyl-alpha-D-glucosamine 1-phosphate + ADP + H(+). Its pathway is cell wall biogenesis; peptidoglycan recycling. Functionally, sugar kinase that catalyzes the ATP-dependent phosphorylation of N-acetylmuramate (MurNAc) and N-acetylglucosamine (GlcNAc) at its C1 hydroxyl group, leading to MurNAc alpha-1P and GlcNAc alpha-1P, respectively. Is likely involved in peptidoglycan recycling as part of a cell wall recycling pathway that bypasses de novo biosynthesis of the peptidoglycan precursor UDP-MurNAc. Is able to complement the fosfomycin sensitivity phenotype of a P.putida mutant lacking amgK. The protein is N-acetylmuramate/N-acetylglucosamine kinase of Neisseria meningitidis serogroup B (strain ATCC BAA-335 / MC58).